A 259-amino-acid chain; its full sequence is DNA repair protein RecO (259 aa).

The protein belongs to the RecO family.

Involved in DNA repair and RecF pathway recombination. This chain is DNA repair protein RecO, found in Leuconostoc mesenteroides subsp. mesenteroides (strain ATCC 8293 / DSM 20343 / BCRC 11652 / CCM 1803 / JCM 6124 / NCDO 523 / NBRC 100496 / NCIMB 8023 / NCTC 12954 / NRRL B-1118 / 37Y).